The sequence spans 214 residues: FMN-dependent NADH:quinone oxidoreductase 1 (214 aa).

Residues 17–19 and 144–147 contribute to the FMN site; these read SWS and SAGG.

Belongs to the azoreductase type 1 family. In terms of assembly, homodimer. FMN is required as a cofactor.

The catalysed reaction is 2 a quinone + NADH + H(+) = 2 a 1,4-benzosemiquinone + NAD(+). It catalyses the reaction N,N-dimethyl-1,4-phenylenediamine + anthranilate + 2 NAD(+) = 2-(4-dimethylaminophenyl)diazenylbenzoate + 2 NADH + 2 H(+). In terms of biological role, quinone reductase that provides resistance to thiol-specific stress caused by electrophilic quinones. Functionally, also exhibits azoreductase activity. Catalyzes the reductive cleavage of the azo bond in aromatic azo compounds to the corresponding amines. The sequence is that of FMN-dependent NADH:quinone oxidoreductase 1 from Lactococcus lactis subsp. lactis (strain IL1403) (Streptococcus lactis).